A 127-amino-acid polypeptide reads, in one-letter code: Fluoride-specific ion channel FluC (127 aa).

4 helical membrane passes run 4 to 24 (SILAIALGAALGALLRWFLGL), 36 to 56 (GTLLANLVGGYAIGAAIAYFA), 68 to 88 (LIITGFCGGLTTFSTFSAEVV), and 99 to 119 (AAGAIATHVGGSLLMTLLGLF). Residues Gly-75 and Thr-78 each coordinate Na(+).

This sequence belongs to the fluoride channel Fluc/FEX (TC 1.A.43) family.

The protein resides in the cell inner membrane. It carries out the reaction fluoride(in) = fluoride(out). Its activity is regulated as follows. Na(+) is not transported, but it plays an essential structural role and its presence is essential for fluoride channel function. Fluoride-specific ion channel. Important for reducing fluoride concentration in the cell, thus reducing its toxicity. This Pseudomonas paraeruginosa (strain DSM 24068 / PA7) (Pseudomonas aeruginosa (strain PA7)) protein is Fluoride-specific ion channel FluC.